Here is a 364-residue protein sequence, read N- to C-terminus: Spermidine/putrescine import ATP-binding protein PotA (364 aa).

The ABC transporter domain maps to 5–235; that stretch reads LSFKSVSKQY…PVNRFVADFI (231 aa). Position 37–44 (37–44) interacts with ATP; sequence GPSGCGKT.

It belongs to the ABC transporter superfamily. Spermidine/putrescine importer (TC 3.A.1.11.1) family. As to quaternary structure, the complex is composed of two ATP-binding proteins (PotA), two transmembrane proteins (PotB and PotC) and a solute-binding protein (PotD).

It localises to the cell membrane. It carries out the reaction ATP + H2O + polyamine-[polyamine-binding protein]Side 1 = ADP + phosphate + polyamineSide 2 + [polyamine-binding protein]Side 1.. Its function is as follows. Part of the ABC transporter complex PotABCD involved in spermidine/putrescine import. Responsible for energy coupling to the transport system. The polypeptide is Spermidine/putrescine import ATP-binding protein PotA (Staphylococcus saprophyticus subsp. saprophyticus (strain ATCC 15305 / DSM 20229 / NCIMB 8711 / NCTC 7292 / S-41)).